Here is a 145-residue protein sequence, read N- to C-terminus: Ribonuclease H (145 aa).

One can recognise an RNase H type-1 domain in the interval 1 to 141 (MQEVTIYSDG…ADALANRGVA (141 aa)). 4 residues coordinate Mg(2+): Asp9, Glu47, Asp69, and Asp133.

Belongs to the RNase H family. In terms of assembly, monomer. The cofactor is Mg(2+).

Its subcellular location is the cytoplasm. It carries out the reaction Endonucleolytic cleavage to 5'-phosphomonoester.. In terms of biological role, endonuclease that specifically degrades the RNA of RNA-DNA hybrids. The sequence is that of Ribonuclease H from Cupriavidus metallidurans (strain ATCC 43123 / DSM 2839 / NBRC 102507 / CH34) (Ralstonia metallidurans).